The following is a 579-amino-acid chain: Glutamine--tRNA ligase (579 aa).

Residues 41–51 (PEPNGYLHIGH) carry the 'HIGH' region motif. Residues 42–44 (EPN) and 48–54 (HIGHAKA) contribute to the ATP site. Residues Asp74 and Tyr218 each contribute to the L-glutamine site. Residues Thr237, 285 to 286 (RL), and 293 to 295 (MSK) each bind ATP. Positions 292–296 (VMSKR) match the 'KMSKS' region motif.

This sequence belongs to the class-I aminoacyl-tRNA synthetase family. As to quaternary structure, monomer.

It is found in the cytoplasm. The catalysed reaction is tRNA(Gln) + L-glutamine + ATP = L-glutaminyl-tRNA(Gln) + AMP + diphosphate. The sequence is that of Glutamine--tRNA ligase from Xanthomonas campestris pv. campestris (strain 8004).